A 395-amino-acid polypeptide reads, in one-letter code: 1-deoxy-D-xylulose 5-phosphate reductoisomerase (395 aa).

Residues T10, G11, S12, I13, A36, and N123 each contribute to the NADPH site. K124 contacts 1-deoxy-D-xylulose 5-phosphate. An NADPH-binding site is contributed by E125. A Mn(2+)-binding site is contributed by D149. The 1-deoxy-D-xylulose 5-phosphate site is built by S150, E151, S185, and H208. E151 provides a ligand contact to Mn(2+). An NADPH-binding site is contributed by G214. The 1-deoxy-D-xylulose 5-phosphate site is built by S221, N226, K227, and E230. Residue E230 coordinates Mn(2+).

This sequence belongs to the DXR family. Mg(2+) is required as a cofactor. It depends on Mn(2+) as a cofactor.

The enzyme catalyses 2-C-methyl-D-erythritol 4-phosphate + NADP(+) = 1-deoxy-D-xylulose 5-phosphate + NADPH + H(+). It participates in isoprenoid biosynthesis; isopentenyl diphosphate biosynthesis via DXP pathway; isopentenyl diphosphate from 1-deoxy-D-xylulose 5-phosphate: step 1/6. Catalyzes the NADPH-dependent rearrangement and reduction of 1-deoxy-D-xylulose-5-phosphate (DXP) to 2-C-methyl-D-erythritol 4-phosphate (MEP). This is 1-deoxy-D-xylulose 5-phosphate reductoisomerase from Shewanella amazonensis (strain ATCC BAA-1098 / SB2B).